A 458-amino-acid chain; its full sequence is Argininosuccinate lyase (458 aa).

The protein belongs to the lyase 1 family. Argininosuccinate lyase subfamily.

It localises to the cytoplasm. It carries out the reaction 2-(N(omega)-L-arginino)succinate = fumarate + L-arginine. The protein operates within amino-acid biosynthesis; L-arginine biosynthesis; L-arginine from L-ornithine and carbamoyl phosphate: step 3/3. The protein is Argininosuccinate lyase of Salmonella typhi.